The primary structure comprises 443 residues: Proline--tRNA ligase (443 aa).

Belongs to the class-II aminoacyl-tRNA synthetase family. ProS type 2 subfamily. Homodimer.

Its subcellular location is the cytoplasm. The catalysed reaction is tRNA(Pro) + L-proline + ATP = L-prolyl-tRNA(Pro) + AMP + diphosphate. Catalyzes the attachment of proline to tRNA(Pro) in a two-step reaction: proline is first activated by ATP to form Pro-AMP and then transferred to the acceptor end of tRNA(Pro). The sequence is that of Proline--tRNA ligase from Methylobacterium nodulans (strain LMG 21967 / CNCM I-2342 / ORS 2060).